Here is a 124-residue protein sequence, read N- to C-terminus: MSGSSSQFSPGKLVPGAINFASGEIVMNEGREAKVISIKNTGDRPIQVGSHFHLFEVNSALVFFDEKGNEDKERKVAYGRRFDIPSGTAIRFEPGDKKEVSIIDLAGTREVWGVNGLVNGKLKK.

Belongs to the urease beta subunit family. In terms of assembly, heterotrimer of UreA (gamma), UreB (beta) and UreC (alpha) subunits. Three heterotrimers associate to form the active enzyme.

It localises to the cytoplasm. The enzyme catalyses urea + 2 H2O + H(+) = hydrogencarbonate + 2 NH4(+). Its pathway is nitrogen metabolism; urea degradation; CO(2) and NH(3) from urea (urease route): step 1/1. The protein is Urease subunit beta of Ureaplasma parvum serovar 3 (strain ATCC 27815 / 27 / NCTC 11736).